A 44-amino-acid chain; its full sequence is Photosystem I reaction center subunit IX (44 aa).

A helical transmembrane segment spans residues 7–27 (YLSTAPVLATLWFGSLAGLLI).

It belongs to the PsaJ family.

Its subcellular location is the plastid. The protein localises to the chloroplast thylakoid membrane. May help in the organization of the PsaE and PsaF subunits. This is Photosystem I reaction center subunit IX from Cycas taitungensis (Prince sago).